The following is a 185-amino-acid chain: HTH-type transcriptional regulator SA2364 (185 aa).

An HTH tetR-type domain is found at 6–66; that stretch reads KENRQRIEEI…YVIQRDLDIF (61 aa). Positions 29 to 48 form a DNA-binding region, H-T-H motif; that stretch reads SMNRIAKELGIGMGTLYRHF.

The sequence is that of HTH-type transcriptional regulator SA2364 from Staphylococcus aureus (strain N315).